Here is a 154-residue protein sequence, read N- to C-terminus: Myoglobin (154 aa).

Positions 2 to 148 (GLSDGEWQLV…FRKDIAAKYK (147 aa)) constitute a Globin domain. The residue at position 4 (Ser4) is a Phosphoserine. Residue His65 coordinates nitrite. His65 serves as a coordination point for O2. Position 68 is a phosphothreonine (Thr68). Position 94 (His94) interacts with heme b.

This sequence belongs to the globin family. As to quaternary structure, monomeric.

The protein resides in the cytoplasm. It localises to the sarcoplasm. It carries out the reaction Fe(III)-heme b-[protein] + nitric oxide + H2O = Fe(II)-heme b-[protein] + nitrite + 2 H(+). The enzyme catalyses H2O2 + AH2 = A + 2 H2O. Its function is as follows. Monomeric heme protein which primary function is to store oxygen and facilitate its diffusion within muscle tissues. Reversibly binds oxygen through a pentacoordinated heme iron and enables its timely and efficient release as needed during periods of heightened demand. Depending on the oxidative conditions of tissues and cells, and in addition to its ability to bind oxygen, it also has a nitrite reductase activity whereby it regulates the production of bioactive nitric oxide. Under stress conditions, like hypoxia and anoxia, it also protects cells against reactive oxygen species thanks to its pseudoperoxidase activity. This Globicephala melas (Long-finned pilot whale) protein is Myoglobin (MB).